Here is a 1237-residue protein sequence, read N- to C-terminus: U3 small nucleolar RNA-associated protein 22 (1237 aa).

The segment at 1-78 (MATSVKRKAS…TNTAATRHNG (78 aa)) is disordered. Residues S10 and S58 each carry the phosphoserine modification. T60 is subject to Phosphothreonine. Polar residues predominate over residues 61–78 (SPESNEVATNTAATRHNG). S64 carries the phosphoserine modification.

The protein belongs to the NRAP family. Interacts with snoRNA U3. Interacts with MPP10. Component of the ribosomal small subunit (SSU) processome composed of at least 40 protein subunits and snoRNA U3. Interacts with UBP10.

It localises to the nucleus. Its subcellular location is the nucleolus. Its function is as follows. Involved in nucleolar processing of pre-18S ribosomal RNA and ribosome assembly. In Saccharomyces cerevisiae (strain ATCC 204508 / S288c) (Baker's yeast), this protein is U3 small nucleolar RNA-associated protein 22 (UTP22).